A 510-amino-acid polypeptide reads, in one-letter code: Light-independent protochlorophyllide reductase subunit B (510 aa).

Asp36 serves as a coordination point for [4Fe-4S] cluster. The Proton donor role is filled by Asp296. Gly431–Met432 provides a ligand contact to substrate.

Belongs to the ChlB/BchB/BchZ family. In terms of assembly, protochlorophyllide reductase is composed of three subunits; ChlL, ChlN and ChlB. Forms a heterotetramer of two ChlB and two ChlN subunits. Requires [4Fe-4S] cluster as cofactor.

Its subcellular location is the plastid. It localises to the chloroplast. It carries out the reaction chlorophyllide a + oxidized 2[4Fe-4S]-[ferredoxin] + 2 ADP + 2 phosphate = protochlorophyllide a + reduced 2[4Fe-4S]-[ferredoxin] + 2 ATP + 2 H2O. It functions in the pathway porphyrin-containing compound metabolism; chlorophyll biosynthesis (light-independent). Component of the dark-operative protochlorophyllide reductase (DPOR) that uses Mg-ATP and reduced ferredoxin to reduce ring D of protochlorophyllide (Pchlide) to form chlorophyllide a (Chlide). This reaction is light-independent. The NB-protein (ChlN-ChlB) is the catalytic component of the complex. This chain is Light-independent protochlorophyllide reductase subunit B, found in Physcomitrium patens (Spreading-leaved earth moss).